The sequence spans 59 residues: Small integral membrane protein 30 (59 aa).

The signal sequence occupies residues 1-24; it reads MTSVSTQLSLVLMSLLLVLPVVEA. At 25–29 the chain is on the extracellular side; sequence VEAGD. The helical transmembrane segment at 30-50 threads the bilayer; sequence AIALLLGVVLSITGICACLGV. Residues 51–59 lie on the Cytoplasmic side of the membrane; the sequence is YARKRNGQM.

In terms of assembly, interacts (via transmembrane domain) with antiviral protein MAVS (via transmembrane domain); the interaction disrupts MAVS interaction with RIGI and inhibits MAVS aggregation, resulting in the repression of type I interferon signaling and innate immune responses.

The protein localises to the endoplasmic reticulum membrane. The protein resides in the mitochondrion membrane. Functionally, negatively regulates antiviral innate immune responses. Disrupts the interaction of antiviral protein MAVS with innate immune receptor RIGI and inhibits MAVS aggregation, resulting in the repression of type I interferon signaling and innate immune responses. This is Small integral membrane protein 30 from Homo sapiens (Human).